We begin with the raw amino-acid sequence, 620 residues long: MAU2 chromatid cohesion factor homolog (620 aa).

TPR repeat units follow at residues 90 to 123 (FDTA…SQHN), 445 to 478 (GSFY…ANAE), and 485 to 518 (SCSL…ASKI).

The protein belongs to the SCC4/mau-2 family. As to quaternary structure, component of the cohesin loading complex.

It is found in the nucleus. The protein localises to the nucleoplasm. Functionally, required for association of the cohesin complex with chromatin during interphase. Plays a role in sister chromatid cohesion and normal progression through prometaphase. This Aedes aegypti (Yellowfever mosquito) protein is MAU2 chromatid cohesion factor homolog.